Here is a 617-residue protein sequence, read N- to C-terminus: RNA polymerase sigma factor RpoD (617 aa).

Residues 192-222 are disordered; sequence NITNDSNENEDENEDENEDEDENSIDPELAN. Residues 198 to 216 are compositionally biased toward acidic residues; sequence NENEDENEDENEDEDENSI. A sigma-70 factor domain-2 region spans residues 383–453; sequence MVEANLRLVI…TRSIADQART (71 aa). The short motif at 407–410 is the Interaction with polymerase core subunit RpoC element; it reads DLIQ. The interval 462–538 is sigma-70 factor domain-3; that stretch reads ETINKLNRIS…DTTLELPLDS (77 aa). Residues 551–604 are sigma-70 factor domain-4; sequence VLSGLTAREAKVLRMRFGIDMNTDHTLEEVGKQFDVTRERIRQIEAKALRKLRH. Residues 577-596 constitute a DNA-binding region (H-T-H motif); the sequence is LEEVGKQFDVTRERIRQIEA.

This sequence belongs to the sigma-70 factor family. RpoD/SigA subfamily. Interacts transiently with the RNA polymerase catalytic core.

The protein localises to the cytoplasm. Functionally, sigma factors are initiation factors that promote the attachment of RNA polymerase to specific initiation sites and are then released. This sigma factor is the primary sigma factor during exponential growth. This is RNA polymerase sigma factor RpoD from Buchnera aphidicola subsp. Schizaphis graminum (strain Sg).